The primary structure comprises 114 residues: UPF0342 protein PEPE_0673 (114 aa).

Belongs to the UPF0342 family.

This is UPF0342 protein PEPE_0673 from Pediococcus pentosaceus (strain ATCC 25745 / CCUG 21536 / LMG 10740 / 183-1w).